A 79-amino-acid chain; its full sequence is D-alanyl carrier protein (79 aa).

In terms of domain architecture, Carrier spans 1-77 (MDVKAEVIEI…KIVEGVTELR (77 aa)). Serine 35 is modified (O-(pantetheine 4'-phosphoryl)serine).

The protein belongs to the DltC family. 4'-phosphopantetheine is transferred from CoA to a specific serine of apo-DCP.

It is found in the cytoplasm. Its pathway is cell wall biogenesis; lipoteichoic acid biosynthesis. Functionally, carrier protein involved in the D-alanylation of lipoteichoic acid (LTA). The loading of thioester-linked D-alanine onto DltC is catalyzed by D-alanine--D-alanyl carrier protein ligase DltA. The DltC-carried D-alanyl group is further transferred to cell membrane phosphatidylglycerol (PG) by forming an ester bond, probably catalyzed by DltD. D-alanylation of LTA plays an important role in modulating the properties of the cell wall in Gram-positive bacteria, influencing the net charge of the cell wall. In Streptococcus thermophilus (strain CNRZ 1066), this protein is D-alanyl carrier protein.